A 267-amino-acid chain; its full sequence is Membrane-associated protein Vipp1 (267 aa).

A coiled-coil region spans residues 26–156 (EKVLEQAVID…KANAELQQTL (131 aa)). A disordered region spans residues 224-252 (GTSAATPQLEAAPVDSSVPANNASQDDAV).

Belongs to the PspA/Vipp/IM30 family.

The protein resides in the cell inner membrane. Its function is as follows. Required for thylakoid formation. The sequence is that of Membrane-associated protein Vipp1 from Synechocystis sp. (strain ATCC 27184 / PCC 6803 / Kazusa).